Here is a 56-residue protein sequence, read N- to C-terminus: Prokaryotic ubiquitin-like protein UBact (56 aa).

Residues 1–56 (MPERIVKPMPQDPVTKPGDEGPRTPNVPKPDTERLLERMRRVDPRQAQRYRQRSGE) are disordered. Residues 30–46 (PDTERLLERMRRVDPRQ) show a composition bias toward basic and acidic residues. Residue Glu-56 forms an Isoglutamyl lysine isopeptide (Glu-Lys) (interchain with K-? in acceptor proteins) linkage.

The protein belongs to the ubiquitin-like protein UBact family.

Its function is as follows. May function as a protein modifier covalently attached to lysine residues of substrate proteins. This may serve to target the modified proteins for degradation by proteasomes. This chain is Prokaryotic ubiquitin-like protein UBact, found in Acetithermum autotrophicum.